A 287-amino-acid polypeptide reads, in one-letter code: Merozoite surface protein 2 (287 aa).

Positions 1 to 20 are cleaved as a signal peptide; the sequence is MKVIKTLSIINFFIFVTFNI. Residues Asn22 and Asn36 are each glycosylated (N-linked (GlcNAc...) asparagine). A disordered region spans residues 42–248; sequence SMTESNPPTG…DSQKECTDGN (207 aa). The segment at 44–213 is polymorphic region; it reads TESNPPTGAS…EQTESPELQS (170 aa). Residues 54 to 112 show a composition bias toward gly residues; that stretch reads GSAGGSAGGSAGGSAGGSAGGSAGGSAGGSAGGSAGGSAGGSAGGSAGGSAGSGDGNGA. 12 tandem repeats follow at residues 55–58, 59–62, 63–66, 67–70, 71–74, 75–78, 79–82, 83–86, 87–90, 91–94, 95–98, and 99–102. The tract at residues 55–102 is 12 X 4 AA tandem repeats of S-A-G-G; the sequence is SAGGSAGGSAGGSAGGSAGGSAGGSAGGSAGGSAGGSAGGSAGGSAGG. Residues 121 to 149 are compositionally biased toward low complexity; the sequence is SPSTPATTTTTTTTNDAEASTSTSSENPN. Polar residues-rich tracts occupy residues 150–180 and 187–215; these read HNNAETNQANKETQNNSNVQQDSQTKSNVPP and KSPTAQPEQAENSAPTAEQTESPELQSAP. Asn164 is a glycosylation site (N-linked (GlcNAc...) asparagine). A glycan (N-linked (GlcNAc...) asparagine) is linked at Asn236. A disulfide bridge links Cys244 with Cys252. 2 N-linked (GlcNAc...) asparagine glycosylation sites follow: Asn260 and Asn261. A lipid anchor (GPI-anchor amidated asparagine) is attached at Asn261. Residues 262-287 constitute a propeptide, removed in mature form; it reads SSNIASINKFVVLISATLVLSFAIFI.

It is found in the cell membrane. In terms of biological role, may play a role in the merozoite attachment to the erythrocyte. This is Merozoite surface protein 2 from Plasmodium falciparum (isolate FCR-3 / Gambia).